The sequence spans 940 residues: Fibronectin-binding protein B (940 aa).

The N-terminal stretch at 1 to 36 is a signal peptide; it reads MKSNLRYGIRKHKLGAASVFLGTMIVVGMGQEKEAA. The interval 36 to 111 is disordered; the sequence is AASEQNNTTV…PKVETSRVDL (76 aa). Residues 38–92 are compositionally biased toward polar residues; that stretch reads SEQNNTTVEESGSSATESKASETQTTTNNVNTIDETQSYSATSTEQPSQSTQVTT. The fibrinogen/elastin/tropoelastin-binding stretch occupies residues 162–480; it reads TGTDVTNKVE…AQGDGKDKLK (319 aa). Disordered regions lie at residues 676 to 746, 764 to 878, and 892 to 918; these read LGYE…NIID, IIEE…GKVV, and VPTKKAQSKKSELPETGGEESTNNGML. One copy of the D-1 repeat lies at 681–718; that stretch reads GQNSGNQSFEEDTEEDKPKYEQGGNIVDIDFDSVPQIH. A D-2 repeat occupies 719 to 756; it reads GQNNGNQSFEEDTEKDKPKYEQGGNIIDIDFDSVPHIH. The D-3 repeat unit spans residues 757-795; that stretch reads GFNKHTEIIEEDTNKDKPNYQFGGHNSVDFEEDTLPQVS. Basic and acidic residues predominate over residues 764-774; it reads IIEEDTNKDKP. The span at 792–802 shows a compositional bias: polar residues; the sequence is PQVSGHNEGQQ. Residues 796–814 form a D-4; truncated repeat; it reads GHNEGQQTIEEDTTPPIVP. A compositionally biased stretch (pro residues) spans 811-860; it reads PIVPPTPPTPEVPSEPETPTPPTPEVPSEPETPTPPTPEVPTEPGKPIPP. WR repeat units lie at residues 815 to 828, 829 to 842, and 857 to 870; these read PTPPTPEVPSEPET and PIPPAKEEPKKPSK. An LPXTG sorting signal motif is present at residues 904-908; the sequence is LPETG. Pentaglycyl murein peptidoglycan amidated threonine is present on threonine 907. A propeptide spans 908 to 940 (removed by sortase); that stretch reads GGEESTNNGMLFGGLFSILGLALLRRNKKNHKA.

In terms of assembly, interacts with host PLG; this interaction provides active plasmin on the surface of bacteria cells. Interacts with host histones.

The protein localises to the secreted. It is found in the cell wall. In terms of biological role, multifunctional protein which promotes bacterial attachment to fibrinogen, elastin and fibronectin. Also promotes the accumulation phase and the primary attachment phase of biofilm formation. In addition, protects against the antimicrobial activity of histones. Mechanistically, captures histones and prevents them from reaching the bacterial membrane and simultaneously binds plasminogen, thereby promoting its conversion to plasmin to destroy the bound histones. In Staphylococcus aureus (strain USA300), this protein is Fibronectin-binding protein B.